The primary structure comprises 221 residues: Ribosomal RNA large subunit methyltransferase E (221 aa).

5 residues coordinate S-adenosyl-L-methionine: G60, W62, D89, D105, and D134. Residue K174 is the Proton acceptor of the active site.

Belongs to the class I-like SAM-binding methyltransferase superfamily. RNA methyltransferase RlmE family.

It is found in the cytoplasm. The catalysed reaction is uridine(2552) in 23S rRNA + S-adenosyl-L-methionine = 2'-O-methyluridine(2552) in 23S rRNA + S-adenosyl-L-homocysteine + H(+). In terms of biological role, specifically methylates the uridine in position 2552 of 23S rRNA at the 2'-O position of the ribose in the fully assembled 50S ribosomal subunit. This chain is Ribosomal RNA large subunit methyltransferase E, found in Cupriavidus necator (strain ATCC 17699 / DSM 428 / KCTC 22496 / NCIMB 10442 / H16 / Stanier 337) (Ralstonia eutropha).